The sequence spans 125 residues: Glycine cleavage system H protein (125 aa).

The Lipoyl-binding domain occupies 23–105 (VSTVGITEHA…FEGGWLFKVR (83 aa)). Lys-64 is subject to N6-lipoyllysine.

This sequence belongs to the GcvH family. As to quaternary structure, the glycine cleavage system is composed of four proteins: P, T, L and H. The cofactor is (R)-lipoate.

In terms of biological role, the glycine cleavage system catalyzes the degradation of glycine. The H protein shuttles the methylamine group of glycine from the P protein to the T protein. The polypeptide is Glycine cleavage system H protein (Streptomyces coelicolor (strain ATCC BAA-471 / A3(2) / M145)).